We begin with the raw amino-acid sequence, 289 residues long: Movement protein (289 aa).

Belongs to the ilarvirus movement protein family.

The protein resides in the host cell junction. The protein localises to the host plasmodesma. Functionally, transports viral genome to neighboring plant cells directly through plasmosdesmata, without any budding. The movement protein allows efficient cell to cell propagation, by bypassing the host cell wall barrier. Acts by forming a tubular structure at the host plasmodesmata, enlarging it enough to allow free passage of virion capsids. The polypeptide is Movement protein (Tobacco streak virus (strain WC) (TSV)).